A 553-amino-acid chain; its full sequence is Zinc finger protein Elbow (553 aa).

Disordered regions lie at residues 59 to 243 (STKQ…MHSP) and 388 to 407 (GGGG…SGGS). Composition is skewed to low complexity over residues 96 to 110 (SPVS…TGSV) and 121 to 134 (SSSS…TFKP). 3 stretches are compositionally biased toward polar residues: residues 137–146 (PNNNISNITT), 153–173 (TNLS…KSMT), and 224–236 (TAST…NSKE). Residues 287–480 (SASAAAAAAS…PDAVLSAAAA (194 aa)) are self-association. Residues 287–553 (SASAAAAAAS…YGPRMGSSHP (267 aa)) form an interaction with noc region. A compositionally biased stretch (gly residues) spans 388–406 (GGGGGGSSKSSGSQGGSGG). A C2H2-type zinc finger spans residues 437-466 (YVCSWIGSDAAYCGKRFGTSDDLFQHLRTH).

Belongs to the Elbow/Noc family. Self-associates. Interacts with gro and noc.

In terms of biological role, may negatively regulate Notch-induced cell proliferation in the eye-head primordium. May act in leg and wing primordia to negatively regulate body-wall specifying genes and thereby promote appendage formation. Required for tracheal development. This chain is Zinc finger protein Elbow (elB), found in Drosophila melanogaster (Fruit fly).